The following is a 432-amino-acid chain: Glutamate-1-semialdehyde 2,1-aminomutase (432 aa).

Position 269 is an N6-(pyridoxal phosphate)lysine (Lys-269).

This sequence belongs to the class-III pyridoxal-phosphate-dependent aminotransferase family. HemL subfamily. In terms of assembly, homodimer. The cofactor is pyridoxal 5'-phosphate.

Its subcellular location is the cytoplasm. It catalyses the reaction (S)-4-amino-5-oxopentanoate = 5-aminolevulinate. It functions in the pathway porphyrin-containing compound metabolism; protoporphyrin-IX biosynthesis; 5-aminolevulinate from L-glutamyl-tRNA(Glu): step 2/2. Its pathway is porphyrin-containing compound metabolism; chlorophyll biosynthesis. The chain is Glutamate-1-semialdehyde 2,1-aminomutase from Chloroherpeton thalassium (strain ATCC 35110 / GB-78).